The primary structure comprises 413 residues: Peptidase T (413 aa).

His81 provides a ligand contact to Zn(2+). Asp83 is an active-site residue. Position 143 (Asp143) interacts with Zn(2+). Residue Glu178 is the Proton acceptor of the active site. 3 residues coordinate Zn(2+): Glu179, Asp201, and His383.

The protein belongs to the peptidase M20B family. Zn(2+) is required as a cofactor.

It localises to the cytoplasm. It catalyses the reaction Release of the N-terminal residue from a tripeptide.. Functionally, cleaves the N-terminal amino acid of tripeptides. The sequence is that of Peptidase T from Lactococcus lactis subsp. hordniae.